The chain runs to 953 residues: Translation initiation factor IF-2 (953 aa).

Disordered stretches follow at residues Ser-48–Phe-212 and Thr-279–Leu-367. Composition is skewed to basic and acidic residues over residues Thr-80–Gln-89, Phe-98–Ala-111, and Gln-140–Lys-188. Polar residues-rich tracts occupy residues Arg-191–Ser-207 and Lys-282–Thr-291. The segment covering Ala-300–Lys-317 has biased composition (basic and acidic residues). The segment covering Ser-322 to Asn-338 has biased composition (low complexity). Over residues Lys-339–Asn-348 the composition is skewed to basic residues. The 170-residue stretch at Glu-454 to Lys-623 folds into the tr-type G domain. Residues Gly-463–Thr-470 are G1. Gly-463–Thr-470 provides a ligand contact to GTP. The segment at Gly-488–His-492 is G2. A G3 region spans residues Asp-509–Gly-512. Residues Asp-509–His-513 and Asn-563–Asp-566 each bind GTP. The interval Asn-563–Asp-566 is G4. Positions Ser-599 to Lys-601 are G5.

It belongs to the TRAFAC class translation factor GTPase superfamily. Classic translation factor GTPase family. IF-2 subfamily.

It is found in the cytoplasm. In terms of biological role, one of the essential components for the initiation of protein synthesis. Protects formylmethionyl-tRNA from spontaneous hydrolysis and promotes its binding to the 30S ribosomal subunits. Also involved in the hydrolysis of GTP during the formation of the 70S ribosomal complex. This Streptococcus pyogenes serotype M3 (strain ATCC BAA-595 / MGAS315) protein is Translation initiation factor IF-2.